We begin with the raw amino-acid sequence, 204 residues long: Cytochrome c oxidase subunit 3 (204 aa).

Helical transmembrane passes span 12-32 (YGNL…IQWW), 56-76 (GMML…WAYF), 101-121 (FQIP…VTWA), 133-153 (AIHS…LQMM), and 171-191 (FFVA…FLFM).

The protein belongs to the cytochrome c oxidase subunit 3 family. As to quaternary structure, component of the cytochrome c oxidase (complex IV, CIV), a multisubunit enzyme composed of a catalytic core of 3 subunits and several supernumerary subunits. The complex exists as a monomer or a dimer and forms supercomplexes (SCs) in the inner mitochondrial membrane with ubiquinol-cytochrome c oxidoreductase (cytochrome b-c1 complex, complex III, CIII).

It localises to the mitochondrion inner membrane. The enzyme catalyses 4 Fe(II)-[cytochrome c] + O2 + 8 H(+)(in) = 4 Fe(III)-[cytochrome c] + 2 H2O + 4 H(+)(out). Its function is as follows. Component of the cytochrome c oxidase, the last enzyme in the mitochondrial electron transport chain which drives oxidative phosphorylation. The respiratory chain contains 3 multisubunit complexes succinate dehydrogenase (complex II, CII), ubiquinol-cytochrome c oxidoreductase (cytochrome b-c1 complex, complex III, CIII) and cytochrome c oxidase (complex IV, CIV), that cooperate to transfer electrons derived from NADH and succinate to molecular oxygen, creating an electrochemical gradient over the inner membrane that drives transmembrane transport and the ATP synthase. Cytochrome c oxidase is the component of the respiratory chain that catalyzes the reduction of oxygen to water. Electrons originating from reduced cytochrome c in the intermembrane space (IMS) are transferred via the dinuclear copper A center (CU(A)) of subunit 2 and heme A of subunit 1 to the active site in subunit 1, a binuclear center (BNC) formed by heme A3 and copper B (CU(B)). The BNC reduces molecular oxygen to 2 water molecules using 4 electrons from cytochrome c in the IMS and 4 protons from the mitochondrial matrix. This Enteroctopus dofleini (North Pacific giant octopus) protein is Cytochrome c oxidase subunit 3 (COIII).